Consider the following 144-residue polypeptide: MEKFLDINEIKKIIPHRYPFLLVDKITELEEGKSAVGYKNVTANEYFFNGHFPEEPVMPGVLIIEALAQVGAVAILSKEEFKGKIAYFGGINKAKFRKKVVPGDVLRLSIELTKIKGVAGVGKAVATVDGKVAAEAELLFVIGK.

Residue His51 is part of the active site.

This sequence belongs to the thioester dehydratase family. FabZ subfamily.

Its subcellular location is the cytoplasm. It carries out the reaction a (3R)-hydroxyacyl-[ACP] = a (2E)-enoyl-[ACP] + H2O. Involved in unsaturated fatty acids biosynthesis. Catalyzes the dehydration of short chain beta-hydroxyacyl-ACPs and long chain saturated and unsaturated beta-hydroxyacyl-ACPs. The chain is 3-hydroxyacyl-[acyl-carrier-protein] dehydratase FabZ from Clostridium botulinum (strain 657 / Type Ba4).